The following is a 99-amino-acid chain: MLNKNKRWYLIALYDIYQGLLTTKQCEYFNLHYFKDLSFSEIAELKEISKSAISDCLNKVCDQLLKYEQALLIYEKNKKRNDLYTLINDSELVKKLKDI.

This sequence belongs to the UPF0122 family.

Functionally, might take part in the signal recognition particle (SRP) pathway. This is inferred from the conservation of its genetic proximity to ftsY/ffh. May be a regulatory protein. The chain is UPF0122 protein UU142 from Ureaplasma parvum serovar 3 (strain ATCC 700970).